Here is a 79-residue protein sequence, read N- to C-terminus: MSDFWHKLGCCVVEKPQPKKKRKRIDRSMIGEPMNFVHLTHIGSGDMGASDGLPRAGGVQEQMRSKCGRDRQWSNSGVL.

2 S-palmitoyl cysteine lipidation sites follow: cysteine 10 and cysteine 11. The CRIB domain occupies 30–43 (IGEPMNFVHLTHIG). The tract at residues 41 to 79 (HIGSGDMGASDGLPRAGGVQEQMRSKCGRDRQWSNSGVL) is disordered. Over residues 63 to 72 (MRSKCGRDRQ) the composition is skewed to basic and acidic residues.

This sequence belongs to the CDC42SE/SPEC family.

Its subcellular location is the cytoplasm. The protein localises to the cytoskeleton. It localises to the cell membrane. In terms of biological role, probably involved in the organization of the actin cytoskeleton by acting downstream of CDC42, inducing actin filament assembly. This Xenopus tropicalis (Western clawed frog) protein is CDC42 small effector protein 1 (cdc42se1).